We begin with the raw amino-acid sequence, 730 residues long: MRKMRIYEYAKEKNLSSKEVIEKLKGLNVHVSNHMSVIDEKTITLLEGNGNQKQGGSGKPEQQKKAGEKKPAQDHGQRKPNTAPAKANNQHDRSQGSDQQKGKAQDGGQKPKHKGNKNKKQHQKNNNNKRNQRGRGRQPEMNKAKPLPEKVTFSGSLTVGELAEKLNKEPSELIKKLMFLGVMATINQELDKDSIELICEDYGVEVEEEVIIDETDIESYVVEDDPSLLKERPPVVTIMGHVDHGKTTLLDSIRNTKVTEGEAGGITQHIGAYQVTVEGKKITFLDTPGHAAFTTMRARGAQVTDITILVVAADDGVMPQTKEAISHAKAAGVPIIVAVNKMDKETANPDRVMQELTEYELVPEAWGGETIFVNVSALTGTGIDELLEMVLLVAEVEELKANPDRLARGTVIEAELDKGRGPVATLLVQSGTLKVGDPIVVGSTFGRVRAMVNDEGRRVKAVGPSTPVEITGLNDVPQAGDQFQAFADEKKARSIGEARATRQKEEERAETSKVSLDDLFNQIQQGEVKEINVIIKADVQGSVEAMRGSLEKIDVEGVKINIIHTGVGAITESDIILAAASNAIVIGFNVRPDGGAKRTAEQEKVDIRLHRVIYNAIEEIEAAMKGMLDPEYEEKIIGQVEVRTTFKVSRIGTIAGSYVTEGKIVRDATVRLIRDGVVIYEGSINALKRFKDDVKEVAQGYECGITLENFNDIKEGDIIEAYVMEEIERT.

A disordered region spans residues 48-151 (GNGNQKQGGS…NKAKPLPEKV (104 aa)). Composition is skewed to basic and acidic residues over residues 61 to 77 (EQQK…DHGQ) and 89 to 104 (NQHD…KGKA). Basic residues predominate over residues 110–123 (KPKHKGNKNKKQHQ). Residues 137-148 (RQPEMNKAKPLP) show a composition bias toward basic and acidic residues. The tr-type G domain maps to 231 to 400 (ERPPVVTIMG…LLVAEVEELK (170 aa)). Positions 240–247 (GHVDHGKT) are G1. 240–247 (GHVDHGKT) is a GTP binding site. The segment at 265 to 269 (GITQH) is G2. The G3 stretch occupies residues 286–289 (DTPG). Residues 286–290 (DTPGH) and 340–343 (NKMD) contribute to the GTP site. Residues 340 to 343 (NKMD) form a G4 region. The interval 376 to 378 (SAL) is G5.

This sequence belongs to the TRAFAC class translation factor GTPase superfamily. Classic translation factor GTPase family. IF-2 subfamily.

The protein resides in the cytoplasm. One of the essential components for the initiation of protein synthesis. Protects formylmethionyl-tRNA from spontaneous hydrolysis and promotes its binding to the 30S ribosomal subunits. Also involved in the hydrolysis of GTP during the formation of the 70S ribosomal complex. This Halalkalibacterium halodurans (strain ATCC BAA-125 / DSM 18197 / FERM 7344 / JCM 9153 / C-125) (Bacillus halodurans) protein is Translation initiation factor IF-2.